The primary structure comprises 188 residues: PRA1 family protein 3 (188 aa).

At Met1 the chain carries N-acetylmethionine. Residues 1–35 are Cytoplasmic-facing; sequence MDVNLAPLRAWDDFFPGSDRFARPDFRDISKWNNR. Transmembrane regions (helical) follow at residues 36–56 and 57–77; these read VVSN…MMIS and VVGF…VLVF. Residues 78-92 are Cytoplasmic-facing; sequence TGFVWAAHNKDILRR. 2 helical membrane-spanning segments follow: residues 93 to 113 and 115 to 135; these read MKKQ…YFLI and MFGG…LMFI. Residues 103–117 are required for homodimer formation and heterodimer formation with ARL6IP1; it reads MVVMLASYFLISMFG. Over 136-188 the chain is Cytoplasmic; it reads HASLRLRNLKNKLENKMEGIGLKKTPMGIILDALEQQEDSINKFADYISKARE. Residues 136–188 are targeting to endoplasmic reticulum membrane; it reads HASLRLRNLKNKLENKMEGIGLKKTPMGIILDALEQQEDSINKFADYISKARE.

This sequence belongs to the PRA1 family. Homodimer. Heterodimer with ARL6IP1. Forms multimers. Interacts with ARL6. Interacts with prenylated RAB1A and RAB3A. Interacts with SLC1A1/EAAC1. Interacts with RTN2 (via first transmembrane domain). Does not interact with VAMP1, VAMP2 or VAMP3. In terms of tissue distribution, ubiquitous. Most abundant in heart and brain. In the embryonic brain cortex, expressed in neurons and astrocytes.

It is found in the endoplasmic reticulum membrane. The protein resides in the cell membrane. It localises to the cytoplasm. Its subcellular location is the cytoskeleton. Its function is as follows. Regulates intracellular concentrations of taurine and glutamate. Negatively modulates SLC1A1/EAAC1 glutamate transport activity by decreasing its affinity for glutamate in a PKC activity-dependent manner. Plays a role in the retention of SLC1A1/EAAC1 in the endoplasmic reticulum. This chain is PRA1 family protein 3 (Arl6ip5), found in Rattus norvegicus (Rat).